Here is a 68-residue protein sequence, read N- to C-terminus: Bifunctional protein GlmU (68 aa).

UDP-N-acetyl-alpha-D-glucosamine-binding positions include 9–12 (LAAG) and lysine 23.

The protein in the N-terminal section; belongs to the N-acetylglucosamine-1-phosphate uridyltransferase family. It in the C-terminal section; belongs to the transferase hexapeptide repeat family. As to quaternary structure, homotrimer. Mg(2+) is required as a cofactor.

Its subcellular location is the cytoplasm. It catalyses the reaction alpha-D-glucosamine 1-phosphate + acetyl-CoA = N-acetyl-alpha-D-glucosamine 1-phosphate + CoA + H(+). The enzyme catalyses N-acetyl-alpha-D-glucosamine 1-phosphate + UTP + H(+) = UDP-N-acetyl-alpha-D-glucosamine + diphosphate. The protein operates within nucleotide-sugar biosynthesis; UDP-N-acetyl-alpha-D-glucosamine biosynthesis; N-acetyl-alpha-D-glucosamine 1-phosphate from alpha-D-glucosamine 6-phosphate (route II): step 2/2. It participates in nucleotide-sugar biosynthesis; UDP-N-acetyl-alpha-D-glucosamine biosynthesis; UDP-N-acetyl-alpha-D-glucosamine from N-acetyl-alpha-D-glucosamine 1-phosphate: step 1/1. It functions in the pathway bacterial outer membrane biogenesis; LPS lipid A biosynthesis. In terms of biological role, catalyzes the last two sequential reactions in the de novo biosynthetic pathway for UDP-N-acetylglucosamine (UDP-GlcNAc). The C-terminal domain catalyzes the transfer of acetyl group from acetyl coenzyme A to glucosamine-1-phosphate (GlcN-1-P) to produce N-acetylglucosamine-1-phosphate (GlcNAc-1-P), which is converted into UDP-GlcNAc by the transfer of uridine 5-monophosphate (from uridine 5-triphosphate), a reaction catalyzed by the N-terminal domain. The polypeptide is Bifunctional protein GlmU (glmU) (Priestia megaterium (Bacillus megaterium)).